The primary structure comprises 384 residues: DNA replication and repair protein RecF (384 aa).

30-37 (GNNAQGKS) serves as a coordination point for ATP.

The protein belongs to the RecF family.

It is found in the cytoplasm. Functionally, the RecF protein is involved in DNA metabolism; it is required for DNA replication and normal SOS inducibility. RecF binds preferentially to single-stranded, linear DNA. It also seems to bind ATP. The polypeptide is DNA replication and repair protein RecF (Gloeothece citriformis (strain PCC 7424) (Cyanothece sp. (strain PCC 7424))).